We begin with the raw amino-acid sequence, 158 residues long: uncharacterized protein (158 aa).

4 helical membrane-spanning segments follow: residues I12–V32, L39–V59, L90–I110, and I113–L133.

It localises to the cell membrane. This is an uncharacterized protein from Mycoplasma genitalium (strain ATCC 33530 / DSM 19775 / NCTC 10195 / G37) (Mycoplasmoides genitalium).